We begin with the raw amino-acid sequence, 193 residues long: Holliday junction branch migration complex subunit RuvA (193 aa).

The segment at 1-64 (MIGRIAGTLI…EDAHLLYGFG (64 aa)) is domain I. Residues 65–143 (TASERNTFRE…AELGHVPGTP (79 aa)) are domain II. A flexible linker region spans residues 144–151 (AVPDSAVD). Residues 151–193 (DVLNALLALGYSEKEAAAAIKQVPAGTGVSDGIKLALKALSKA) are domain III.

It belongs to the RuvA family. In terms of assembly, homotetramer. Forms an RuvA(8)-RuvB(12)-Holliday junction (HJ) complex. HJ DNA is sandwiched between 2 RuvA tetramers; dsDNA enters through RuvA and exits via RuvB. An RuvB hexamer assembles on each DNA strand where it exits the tetramer. Each RuvB hexamer is contacted by two RuvA subunits (via domain III) on 2 adjacent RuvB subunits; this complex drives branch migration. In the full resolvosome a probable DNA-RuvA(4)-RuvB(12)-RuvC(2) complex forms which resolves the HJ.

It localises to the cytoplasm. Functionally, the RuvA-RuvB-RuvC complex processes Holliday junction (HJ) DNA during genetic recombination and DNA repair, while the RuvA-RuvB complex plays an important role in the rescue of blocked DNA replication forks via replication fork reversal (RFR). RuvA specifically binds to HJ cruciform DNA, conferring on it an open structure. The RuvB hexamer acts as an ATP-dependent pump, pulling dsDNA into and through the RuvAB complex. HJ branch migration allows RuvC to scan DNA until it finds its consensus sequence, where it cleaves and resolves the cruciform DNA. This Cupriavidus necator (strain ATCC 17699 / DSM 428 / KCTC 22496 / NCIMB 10442 / H16 / Stanier 337) (Ralstonia eutropha) protein is Holliday junction branch migration complex subunit RuvA.